Consider the following 1400-residue polypeptide: Bromodomain-containing protein 4 (1400 aa).

A disordered region spans residues 1 to 58; the sequence is MSTESGPGTRLRNLPVMGDGLETSQMSTTQAQAQPQPANAASTNPPPPETSNPNKPKR. A compositionally biased stretch (low complexity) spans 23–43; that stretch reads TSQMSTTQAQAQPQPANAAST. Positions 58 to 164 constitute a Bromo 1 domain; the sequence is RQTNQLQYLL…KLFLQKINEL (107 aa). K99 is covalently cross-linked (Glycyl lysine isopeptide (Lys-Gly) (interchain with G-Cter in SUMO2)). Disordered stretches follow at residues 176–353 and 461–616; these read AKGR…KISE and EPEE…YEEK. The span at 197-212 shows a compositional bias: low complexity; sequence PNTTQASTSPQTQTPQ. Over residues 244 to 267 the composition is skewed to pro residues; that stretch reads PPQPLQTPSPVPPQPPPPPAPVPQ. Basic and acidic residues predominate over residues 321 to 337; the sequence is PRRESSRPVKPPKKDVP. In terms of domain architecture, Bromo 2 spans 349-458; the sequence is SKISEQLKCC…DVFEMRFAKM (110 aa). The residue at position 471 (S471) is a Phosphoserine. The segment covering 479 to 498 has biased composition (low complexity); sequence KVVAPPSSSDSSSDSSSDSD. Phosphoserine; by CK2 occurs at positions 485, 489, and 493. Residues 485-504 form an NPS region region; sequence SSSDSSSDSSSDSDSSTDDS. S495 carries the post-translational modification Phosphoserine. 3 positions are modified to phosphoserine; by CK2: S499, S500, and S504. Positions 525 to 580 are BID region; sequence QLAALSQPQQNKPKKKEKDKKEKKKEKHKKKEEVEENKKSKTKELPPKKTKKNNSS. A compositionally biased stretch (basic residues) spans 536–554; it reads KPKKKEKDKKEKKKEKHKK. The segment covering 555–571 has biased composition (basic and acidic residues); it reads KEEVEENKKSKTKELPP. K586 is covalently cross-linked (Glycyl lysine isopeptide (Lys-Gly) (interchain with G-Cter in SUMO2)). The region spanning 601 to 683 is the NET domain; it reads ESEEEDKCKP…SCLRKKRKPQ (83 aa). Phosphoserine is present on S602. Over residues 606–616 the composition is skewed to basic and acidic residues; that stretch reads DKCKPMSYEEK. Residues K646 and K695 each participate in a glycyl lysine isopeptide (Lys-Gly) (interchain with G-Cter in SUMO2) cross-link. The segment at 675–1125 is disordered; it reads CLRKKRKPQA…GCPPASPAAV (451 aa). Positions 700–713 are enriched in low complexity; that stretch reads SSSESESTSESSSS. Positions 725–745 are enriched in basic residues; that stretch reads KSKKKGHTGRDQKKHHHHHHP. 4 stretches are compositionally biased toward pro residues: residues 748–787, 835–848, 883–892, and 900–909; these read QPAPAPVPQQPPPPPQQPPPPPPPQQQQQQPPPPPPPPSM, PELPPHLPQPPEHS, PPKPTRPPAV, and PLLPQPPMAQ. A compositionally biased stretch (low complexity) spans 928–938; it reads MQMQLYLQQLQ. 3 stretches are compositionally biased toward pro residues: residues 955–966, 975–1000, and 1013–1037; these read QPPPPLPPPPHP, PQPPPPPPPQPQPPPQQQHQPPPRPV, and QPPPPPGQQPTHPPPGQQPPPPQPA. Positions 1050 to 1400 are C-terminal (CTD) region; the sequence is RHHKSDPYSA…LLSIFEENLF (351 aa). A Glycyl lysine isopeptide (Lys-Gly) (interchain with G-Cter in SUMO2) cross-link involves residue K1053. The segment covering 1075 to 1084 has biased composition (polar residues); that stretch reads QMPQFQSLTH. Low complexity predominate over residues 1085–1095; that stretch reads QSPPQQNVQPK. Position 1147 is an N6-acetyllysine; alternate (K1147). K1147 participates in a covalent cross-link: Glycyl lysine isopeptide (Lys-Gly) (interchain with G-Cter in SUMO1); alternate. A Glycyl lysine isopeptide (Lys-Gly) (interchain with G-Cter in SUMO2); alternate cross-link involves residue K1147. Phosphoserine is present on residues S1153 and S1162. The segment at 1155 to 1377 is disordered; sequence IIRSEPFSTS…KREQERRRRE (223 aa). Basic and acidic residues predominate over residues 1211–1232; it reads PDKDKQKQEPKTPVAPKKDLKI. A Glycyl lysine isopeptide (Lys-Gly) (interchain with G-Cter in SUMO2) cross-link involves residue K1233. Phosphoserine occurs at positions 1237 and 1240. The span at 1247 to 1258 shows a compositional bias: low complexity; sequence TTPSSTAKSSSD. A compositionally biased stretch (basic and acidic residues) spans 1259–1320; the sequence is SFEHFRRAAR…AHEEARRRQE (62 aa). Over residues 1321–1357 the composition is skewed to low complexity; it reads QQQQQQQQRQEQQQQQQQAAAVAAASAPQAQSSQPQS. Residues 1361–1377 are compositionally biased toward basic and acidic residues; that stretch reads QQRELARKREQERRRRE.

This sequence belongs to the BET family. As to quaternary structure, binds acetylated histone H4. Interacts with p53/TP53; the interaction is direct. Interacts (via CTD region) with CDK9 and CCNT1, acting as an associated component of P-TEFb complex. Interacts with RELA (when acetylated at 'Lys-310'). Interacts (via NET domain) with NSD3, CHD4, BICRA and ATAD5. The interaction with BICRA bridges BRD4 to the GBAF complex. Interacts (via NET domain) with JMJD6 (via JmjC and N-terminal domains); the interaction is stronger in presence of ssRNA and recruits JMJD6 on distal enhancers. Interacts with NSD3. Interacts with NIPBL. Phosphorylation by CK2 disrupt the intramolecular binding between the bromo domain 2 and the NPS region and promotes binding between the NPS and the BID regions, leading to activate the protein and promote binding to acetylated histones. In absence of phosphorylation, BRD4 does not localize to p53/TP53 target gene promoters, phosphorylation promoting recruitment to p53/TP53 target promoters.

The protein localises to the nucleus. It is found in the chromosome. In terms of biological role, chromatin reader protein that recognizes and binds acetylated histones and plays a key role in transmission of epigenetic memory across cell divisions and transcription regulation. Remains associated with acetylated chromatin throughout the entire cell cycle and provides epigenetic memory for postmitotic G1 gene transcription by preserving acetylated chromatin status and maintaining high-order chromatin structure. During interphase, plays a key role in regulating the transcription of signal-inducible genes by associating with the P-TEFb complex and recruiting it to promoters. Also recruits P-TEFb complex to distal enhancers, so called anti-pause enhancers in collaboration with JMJD6. BRD4 and JMJD6 are required to form the transcriptionally active P-TEFb complex by displacing negative regulators such as HEXIM1 and 7SKsnRNA complex from P-TEFb, thereby transforming it into an active form that can then phosphorylate the C-terminal domain (CTD) of RNA polymerase II. Regulates differentiation of naive CD4(+) T-cells into T-helper Th17 by promoting recruitment of P-TEFb to promoters. Promotes phosphorylation of 'Ser-2' of the C-terminal domain (CTD) of RNA polymerase II. According to a report, directly acts as an atypical protein kinase and mediates phosphorylation of 'Ser-2' of the C-terminal domain (CTD) of RNA polymerase II; these data however need additional evidences in vivo. In addition to acetylated histones, also recognizes and binds acetylated RELA, leading to further recruitment of the P-TEFb complex and subsequent activation of NF-kappa-B. Also acts as a regulator of p53/TP53-mediated transcription: following phosphorylation by CK2, recruited to p53/TP53 specific target promoters. This is Bromodomain-containing protein 4 (Brd4) from Mus musculus (Mouse).